A 65-amino-acid chain; its full sequence is MPKMKTHRGAAKRFKKTGTGKLKRAHAFTSHILTKKSAKRKRNLRKTGYVSTAQEKAMKKLLPYL.

Residues 1 to 23 (MPKMKTHRGAAKRFKKTGTGKLK) form a disordered region.

This sequence belongs to the bacterial ribosomal protein bL35 family.

The polypeptide is Large ribosomal subunit protein bL35 (Clostridium perfringens (strain ATCC 13124 / DSM 756 / JCM 1290 / NCIMB 6125 / NCTC 8237 / Type A)).